The following is a 130-amino-acid chain: MAQVQYIGTGRRKSSVARVRLVPGTGKIVINKREIEEYVPFAALREVIKQPLVATETTGSYDIHVNVNGGGYTGQAGAVRHGIARALLQVDPDFRAALKSAGLLTRDSRMKERKKPGLRGARRAPQFSKR.

Residues Thr105 to Arg130 are disordered. The segment covering Lys111–Arg130 has biased composition (basic residues).

This sequence belongs to the universal ribosomal protein uS9 family.

The polypeptide is Small ribosomal subunit protein uS9 (Lysinibacillus sphaericus (strain C3-41)).